The primary structure comprises 365 residues: Adenosine deaminase (365 aa).

The Zn(2+) site is built by His-19 and His-21. Residues His-21, Asp-23, and Gly-181 each contribute to the substrate site. Position 208 (His-208) interacts with Zn(2+). Glu-211 (proton donor) is an active-site residue. Asp-300 contributes to the Zn(2+) binding site.

This sequence belongs to the metallo-dependent hydrolases superfamily. Adenosine and AMP deaminases family. Adenosine deaminase subfamily. It depends on Zn(2+) as a cofactor.

It catalyses the reaction adenosine + H2O + H(+) = inosine + NH4(+). The enzyme catalyses 2'-deoxyadenosine + H2O + H(+) = 2'-deoxyinosine + NH4(+). Its function is as follows. Catalyzes the hydrolytic deamination of adenosine and 2-deoxyadenosine. The polypeptide is Adenosine deaminase (Mycobacterium tuberculosis (strain ATCC 25177 / H37Ra)).